The primary structure comprises 126 residues: Probable prefoldin subunit 4 (126 aa).

It belongs to the prefoldin subunit beta family. As to quaternary structure, heterohexamer of two PFD-alpha type and four PFD-beta type subunits.

In terms of biological role, binds specifically to cytosolic chaperonin (c-CPN) and transfers target proteins to it. Binds to nascent polypeptide chain and promotes folding in an environment in which there are many competing pathways for nonnative proteins. Appears to play a non-essential role. The protein is Probable prefoldin subunit 4 of Caenorhabditis briggsae.